We begin with the raw amino-acid sequence, 185 residues long: Elongation factor P (185 aa).

It belongs to the elongation factor P family.

The protein localises to the cytoplasm. The protein operates within protein biosynthesis; polypeptide chain elongation. Involved in peptide bond synthesis. Stimulates efficient translation and peptide-bond synthesis on native or reconstituted 70S ribosomes in vitro. Probably functions indirectly by altering the affinity of the ribosome for aminoacyl-tRNA, thus increasing their reactivity as acceptors for peptidyl transferase. The protein is Elongation factor P of Listeria innocua serovar 6a (strain ATCC BAA-680 / CLIP 11262).